The sequence spans 357 residues: Alanine racemase (357 aa).

The Proton acceptor; specific for D-alanine role is filled by Lys35. At Lys35 the chain carries N6-(pyridoxal phosphate)lysine. Arg130 is a binding site for substrate. Residue Tyr255 is the Proton acceptor; specific for L-alanine of the active site. Met303 serves as a coordination point for substrate.

The protein belongs to the alanine racemase family. Pyridoxal 5'-phosphate is required as a cofactor.

It carries out the reaction L-alanine = D-alanine. It participates in amino-acid biosynthesis; D-alanine biosynthesis; D-alanine from L-alanine: step 1/1. In terms of biological role, catalyzes the interconversion of L-alanine and D-alanine. May also act on other amino acids. The protein is Alanine racemase (alr) of Nitrosospira multiformis (strain ATCC 25196 / NCIMB 11849 / C 71).